Consider the following 459-residue polypeptide: ATP synthase subunit beta (459 aa).

Residue 148-155 (GGAGVGKT) participates in ATP binding.

Belongs to the ATPase alpha/beta chains family. F-type ATPases have 2 components, CF(1) - the catalytic core - and CF(0) - the membrane proton channel. CF(1) has five subunits: alpha(3), beta(3), gamma(1), delta(1), epsilon(1). CF(0) has three main subunits: a(1), b(2) and c(9-12). The alpha and beta chains form an alternating ring which encloses part of the gamma chain. CF(1) is attached to CF(0) by a central stalk formed by the gamma and epsilon chains, while a peripheral stalk is formed by the delta and b chains.

Its subcellular location is the cell inner membrane. The enzyme catalyses ATP + H2O + 4 H(+)(in) = ADP + phosphate + 5 H(+)(out). Its function is as follows. Produces ATP from ADP in the presence of a proton gradient across the membrane. The catalytic sites are hosted primarily by the beta subunits. This is ATP synthase subunit beta from Vesicomyosocius okutanii subsp. Calyptogena okutanii (strain HA).